We begin with the raw amino-acid sequence, 140 residues long: Large ribosomal subunit protein uL13 (140 aa).

The protein belongs to the universal ribosomal protein uL13 family. In terms of assembly, part of the 50S ribosomal subunit.

Its function is as follows. This protein is one of the early assembly proteins of the 50S ribosomal subunit, although it is not seen to bind rRNA by itself. It is important during the early stages of 50S assembly. This is Large ribosomal subunit protein uL13 from Methanosarcina mazei (strain ATCC BAA-159 / DSM 3647 / Goe1 / Go1 / JCM 11833 / OCM 88) (Methanosarcina frisia).